The primary structure comprises 85 residues: BmK AGP-SYPU2 (85 aa).

Residues 1 to 19 (MNYMVIISLALLVMTGVES) form the signal peptide. The LCN-type CS-alpha/beta domain occupies 21–83 (KDGYIADDRN…ARIMKPGRCN (63 aa)). Disulfide bonds link Cys31–Cys82, Cys35–Cys55, Cys41–Cys65, and Cys45–Cys67.

This sequence belongs to the long (4 C-C) scorpion toxin superfamily. Sodium channel inhibitor family. Alpha subfamily. As to expression, expressed by the venom gland.

It localises to the secreted. Functionally, alpha toxins bind voltage-independently at site-3 of sodium channels (Nav) and inhibit the inactivation of the activated channels, thereby blocking neuronal transmission. Shows analgesic activity when intraperitoneally injected into mice. In Olivierus martensii (Manchurian scorpion), this protein is BmK AGP-SYPU2.